The chain runs to 465 residues: Protein CitXG (465 aa).

The apo-citrate lyase phosphoribosyl-dephospho-CoA transferase stretch occupies residues Met1–Ala182. Positions Glu183–Asn465 are 2-(5''-triphosphoribosyl)-3'-dephosphocoenzyme-A synthase.

It in the N-terminal section; belongs to the CitX family. In the C-terminal section; belongs to the CitG/MdcB family.

It catalyses the reaction apo-[citrate lyase ACP] + 2'-(5''-triphospho-alpha-D-ribosyl)-3'-dephospho-CoA = holo-[citrate lyase ACP] + diphosphate. The catalysed reaction is 3'-dephospho-CoA + ATP = 2'-(5''-triphospho-alpha-D-ribosyl)-3'-dephospho-CoA + adenine. Functionally, bifunctional enzyme that catalyzes formation of 2-(5''-triphosphoribosyl)-3'-dephosphocoenzyme-A, and then the transfer of this prosthetic group precursor to the apo-acyl carrier protein (gamma chain) of the citrate lyase to yield the holo-acyl carrier protein. The protein is Protein CitXG (citXG) of Haemophilus influenzae (strain ATCC 51907 / DSM 11121 / KW20 / Rd).